A 133-amino-acid polypeptide reads, in one-letter code: uncharacterized protein (133 aa).

The 120-residue stretch at 9–128 (RILVYSDNVQ…VLGRTVLSLL (120 aa)) folds into the Response regulatory domain. 4-aspartylphosphate is present on aspartate 64.

This is an uncharacterized protein from Mycobacterium tuberculosis (strain CDC 1551 / Oshkosh).